Reading from the N-terminus, the 215-residue chain is MKFFLDTANVEKIKEFNALGLVDGVTTNPSLIKKEGRDFYEVIKEICSIVDGPVSAEVIALDSEGMVKEARELVKLAENVVVKIPMTKEGMKAVNILSKEGIKTNVTLIFSANQALLAAKAGASYVSPFVGRLDDVGQDGMFLISEVMQVFGAYGIETEVIVASVRHPIHVLESAKMGADIATIPFDVLDKLFNHPLTDNGIAKFLSDWEAHMNR.

The Schiff-base intermediate with substrate role is filled by K83.

The protein belongs to the transaldolase family. Type 3B subfamily.

The protein localises to the cytoplasm. It catalyses the reaction D-sedoheptulose 7-phosphate + D-glyceraldehyde 3-phosphate = D-erythrose 4-phosphate + beta-D-fructose 6-phosphate. The protein operates within carbohydrate degradation; pentose phosphate pathway; D-glyceraldehyde 3-phosphate and beta-D-fructose 6-phosphate from D-ribose 5-phosphate and D-xylulose 5-phosphate (non-oxidative stage): step 2/3. Functionally, transaldolase is important for the balance of metabolites in the pentose-phosphate pathway. This is Probable transaldolase from Methanococcus maripaludis (strain DSM 14266 / JCM 13030 / NBRC 101832 / S2 / LL).